Here is a 929-residue protein sequence, read N- to C-terminus: Bifunctional uridylyltransferase/uridylyl-removing enzyme (929 aa).

A uridylyltransferase region spans residues 1–383 (MDSVTTEHKQ…RPTPAKRRVP (383 aa)). Residues 384-739 (DSDDFIVDNN…VGFDEVRGVT (356 aa)) are uridylyl-removing. An HD domain is found at 499–622 (VDEHLIRCVG…VQSVEQMKLL (124 aa)). 2 consecutive ACT domains span residues 740–822 (ELTI…VVAR) and 850–927 (VIEV…AVQP).

Belongs to the GlnD family. Mg(2+) serves as cofactor.

The catalysed reaction is [protein-PII]-L-tyrosine + UTP = [protein-PII]-uridylyl-L-tyrosine + diphosphate. The enzyme catalyses [protein-PII]-uridylyl-L-tyrosine + H2O = [protein-PII]-L-tyrosine + UMP + H(+). Its activity is regulated as follows. Uridylyltransferase (UTase) activity is inhibited by glutamine, while glutamine activates uridylyl-removing (UR) activity. Functionally, modifies, by uridylylation and deuridylylation, the PII regulatory proteins (GlnB and homologs), in response to the nitrogen status of the cell that GlnD senses through the glutamine level. Under low glutamine levels, catalyzes the conversion of the PII proteins and UTP to PII-UMP and PPi, while under higher glutamine levels, GlnD hydrolyzes PII-UMP to PII and UMP (deuridylylation). Thus, controls uridylylation state and activity of the PII proteins, and plays an important role in the regulation of nitrogen fixation and metabolism. The chain is Bifunctional uridylyltransferase/uridylyl-removing enzyme from Bradyrhizobium diazoefficiens (strain JCM 10833 / BCRC 13528 / IAM 13628 / NBRC 14792 / USDA 110).